Here is a 523-residue protein sequence, read N- to C-terminus: MKKFKRRLSLTLRGSQTIDESLSELAEQMTIEESSSKDNEPIVKNGRPPTSHSMHSFLHQYTGSFKKPPLRRPHSVIGGSLGSFMAMPRNGSRLDIVHENLKMGSDGESDQASGTSSDEVQSPTGVCLRNRIHRRISMEDLNKRLSLPADIRIPDGYLEKLQISSPPFDQPMSRRSRRASLSEIGFGKMETYIKLEKLGEGTYATVYKGRSKLTENLVALKEIRLEHEEGAPCTAIREVSLLKDLKHANIVTLHDIVHTDKSLTLVFEYLDKDLKQYMDDCGSIMSMHNVKLFLYQILRGLAYCHRRKVLHRDLKPQNLLINERGELKLADFGLARAKSVPTKTYSNEVVTLWYRPPDVLLGSSEYSTQIDMWGVGCIFFEMASGRPLFPGSTVEDELHLIFRLLGTPSQETWPGVSSNDEFKNYNFPKYKPQPLINHAPRLDSEGIELITKFLQYESKKRAPAEEAMKHVYFRSLGPRIHALPESVSIFSLKEIQLQKDPGFRNSSYPETGVFVINHFTCRS.

Serine 9 bears the Phosphoserine mark. Residues 31–55 (IEESSSKDNEPIVKNGRPPTSHSMH) are disordered. Phosphoserine is present on residues serine 80, serine 92, and serine 105. Residues 103 to 123 (MGSDGESDQASGTSSDEVQSP) form a disordered region. Polar residues predominate over residues 110–123 (DQASGTSSDEVQSP). 4 positions are modified to phosphoserine: serine 137, serine 146, serine 165, and serine 180. In terms of domain architecture, Protein kinase spans 192–473 (YIKLEKLGEG…AEEAMKHVYF (282 aa)). ATP is bound by residues 198 to 206 (LGEGTYATV) and lysine 221. The Proton acceptor role is filled by aspartate 313.

Belongs to the protein kinase superfamily. CMGC Ser/Thr protein kinase family. CDC2/CDKX subfamily. In terms of assembly, found in a complex containing CABLES1, CDK16 and TDRD7. Interacts with TDRD7. As to expression, brain specific. Within the brain it is concentrated in the neuronal layers of the hippocampus and olfactory bulb, which mostly consist of post-mitotic neurons.

It carries out the reaction L-seryl-[protein] + ATP = O-phospho-L-seryl-[protein] + ADP + H(+). The catalysed reaction is L-threonyl-[protein] + ATP = O-phospho-L-threonyl-[protein] + ADP + H(+). In terms of biological role, may play a role in terminally differentiated neurons. Has a Ser/Thr-phosphorylating activity for histone H1. This Rattus norvegicus (Rat) protein is Cyclin-dependent kinase 17 (Cdk17).